Consider the following 443-residue polypeptide: Glucose-6-phosphate isomerase (443 aa).

E285 (proton donor) is an active-site residue. Catalysis depends on residues H306 and K420.

It belongs to the GPI family.

The protein resides in the cytoplasm. The enzyme catalyses alpha-D-glucose 6-phosphate = beta-D-fructose 6-phosphate. It participates in carbohydrate biosynthesis; gluconeogenesis. The protein operates within carbohydrate degradation; glycolysis; D-glyceraldehyde 3-phosphate and glycerone phosphate from D-glucose: step 2/4. Catalyzes the reversible isomerization of glucose-6-phosphate to fructose-6-phosphate. This chain is Glucose-6-phosphate isomerase, found in Staphylococcus epidermidis (strain ATCC 12228 / FDA PCI 1200).